The chain runs to 354 residues: NADPH dehydrogenase (354 aa).

FMN contacts are provided by serine 23, proline 24, cysteine 26, alanine 58, and glutamine 100. Tyrosine 182 serves as the catalytic Proton donor. FMN-binding residues include arginine 230, leucine 301, glycine 323, and arginine 324.

Belongs to the NADH:flavin oxidoreductase/NADH oxidase family. NamA subfamily. As to quaternary structure, homodimer. Behaves as an active monomer in solution while in the crystal packing assembles following the classical dimeric architecture of other thermophilic-like ene-reductases. The cofactor is FMN.

It carries out the reaction A + NADPH + H(+) = AH2 + NADP(+). Ene-reductase that catalyzes the stereoselective reduction of activated C-C double bonds. Shows very good activity with 4-ketoisophorone, 2-cyclohexen-1-one and 1-octen-3-one, and low activity with maleimide, 2-methyl-pentenal, 2-methyl-cyclohexen-1-one, 2-cyclopenten-1-one and trans-2-hexen-1-al. Shows the highest catalytic efficiency with ketoisophorone. Exhibits a restricted substrate spectrum with generally lower activities compared to other ene-reductases. In Chloroflexus aggregans (strain MD-66 / DSM 9485), this protein is NADPH dehydrogenase.